Reading from the N-terminus, the 430-residue chain is Probable aspartic-type endopeptidase ARB_07403 (430 aa).

The first 17 residues, 1 to 17 (MHVSTLLVAVLLPLALS), serve as a signal peptide directing secretion. A propeptide spans 18–87 (KPTPRKKTGS…SKATAGSGKE (70 aa)) (activation peptide). Residues 66–105 (YHPQHISKLPGNSKATAGSGKEGVESQDEKGEVVNNPTNH) form a disordered region. Residues 87–97 (EGVESQDEKGE) show a composition bias toward basic and acidic residues. The Peptidase A1 domain maps to 109–427 (FLSPVTIGGQ…DQRGPSISLA (319 aa)). D125 is an active-site residue. The N-linked (GlcNAc...) asparagine glycan is linked to N306. Residue D314 is part of the active site.

The protein belongs to the peptidase A1 family.

It is found in the secreted. Probable secreted aspartic-type endopeptidase which contributes to virulence. This chain is Probable aspartic-type endopeptidase ARB_07403, found in Arthroderma benhamiae (strain ATCC MYA-4681 / CBS 112371) (Trichophyton mentagrophytes).